Reading from the N-terminus, the 30-residue chain is Diuretic hormone 2 (30 aa).

A Valine amide modification is found at Val30.

It belongs to the sauvagine/corticotropin-releasing factor/urotensin I family.

The protein localises to the secreted. Its function is as follows. Regulation of fluid secretion. This chain is Diuretic hormone 2, found in Manduca sexta (Tobacco hawkmoth).